We begin with the raw amino-acid sequence, 277 residues long: Protein RKD3 (277 aa).

In terms of domain architecture, RWP-RK spans 142–226 (KRIIMKRRYR…LGNTKGRTPK (85 aa)). Residues 201 to 246 (RKLTSLNALIANLKDLLGNTKGRTPKSKLRNALELLEMEKKMIEEV) adopt a coiled-coil conformation.

The protein resides in the nucleus. Functionally, putative transcription factor. This Arabidopsis thaliana (Mouse-ear cress) protein is Protein RKD3 (RKD3).